The sequence spans 398 residues: Phosphopentomutase (398 aa).

Residues aspartate 13, aspartate 290, histidine 295, aspartate 331, histidine 332, and histidine 343 each coordinate Mn(2+).

It belongs to the phosphopentomutase family. Mn(2+) serves as cofactor.

Its subcellular location is the cytoplasm. The catalysed reaction is 2-deoxy-alpha-D-ribose 1-phosphate = 2-deoxy-D-ribose 5-phosphate. The enzyme catalyses alpha-D-ribose 1-phosphate = D-ribose 5-phosphate. It functions in the pathway carbohydrate degradation; 2-deoxy-D-ribose 1-phosphate degradation; D-glyceraldehyde 3-phosphate and acetaldehyde from 2-deoxy-alpha-D-ribose 1-phosphate: step 1/2. Its function is as follows. Isomerase that catalyzes the conversion of deoxy-ribose 1-phosphate (dRib-1-P) and ribose 1-phosphate (Rib-1-P) to deoxy-ribose 5-phosphate (dRib-5-P) and ribose 5-phosphate (Rib-5-P), respectively. The protein is Phosphopentomutase of Clostridium tetani (strain Massachusetts / E88).